Consider the following 357-residue polypeptide: Heat-inducible transcription repressor HrcA (357 aa).

Belongs to the HrcA family.

Functionally, negative regulator of class I heat shock genes (grpE-dnaK-dnaJ and groELS operons). Prevents heat-shock induction of these operons. This Chlorobium phaeovibrioides (strain DSM 265 / 1930) (Prosthecochloris vibrioformis (strain DSM 265)) protein is Heat-inducible transcription repressor HrcA.